A 460-amino-acid chain; its full sequence is UDP-N-acetylmuramate--L-alanine ligase (460 aa).

ATP is bound at residue 118–124; that stretch reads GAHGKTT.

It belongs to the MurCDEF family.

The protein resides in the cytoplasm. The catalysed reaction is UDP-N-acetyl-alpha-D-muramate + L-alanine + ATP = UDP-N-acetyl-alpha-D-muramoyl-L-alanine + ADP + phosphate + H(+). It functions in the pathway cell wall biogenesis; peptidoglycan biosynthesis. In terms of biological role, cell wall formation. The protein is UDP-N-acetylmuramate--L-alanine ligase of Clostridium botulinum (strain Eklund 17B / Type B).